A 192-amino-acid chain; its full sequence is Orotate phosphoribosyltransferase (192 aa).

116 to 124 contributes to the 5-phospho-alpha-D-ribose 1-diphosphate binding site; it reads EDIVTTGLS. Orotate contacts are provided by Thr120 and Arg148.

The protein belongs to the purine/pyrimidine phosphoribosyltransferase family. PyrE subfamily. In terms of assembly, homodimer. Mg(2+) serves as cofactor.

It catalyses the reaction orotidine 5'-phosphate + diphosphate = orotate + 5-phospho-alpha-D-ribose 1-diphosphate. It participates in pyrimidine metabolism; UMP biosynthesis via de novo pathway; UMP from orotate: step 1/2. Catalyzes the transfer of a ribosyl phosphate group from 5-phosphoribose 1-diphosphate to orotate, leading to the formation of orotidine monophosphate (OMP). This chain is Orotate phosphoribosyltransferase, found in Brucella canis (strain ATCC 23365 / NCTC 10854 / RM-666).